The sequence spans 263 residues: Endonuclease 8 (263 aa).

The active-site Schiff-base intermediate with DNA is the P2. The active-site Proton donor is the E3. K53 (proton donor; for beta-elimination activity) is an active-site residue. The DNA site is built by Q70, R125, and N169. Residues 229–263 form an FPG-type zinc finger; the sequence is KVFHRDGERCERCGGIIEKTTLSSRPFYWCPGCQH. Residue R253 is the Proton donor; for delta-elimination activity of the active site.

This sequence belongs to the FPG family. Zn(2+) is required as a cofactor.

It catalyses the reaction 2'-deoxyribonucleotide-(2'-deoxyribose 5'-phosphate)-2'-deoxyribonucleotide-DNA = a 3'-end 2'-deoxyribonucleotide-(2,3-dehydro-2,3-deoxyribose 5'-phosphate)-DNA + a 5'-end 5'-phospho-2'-deoxyribonucleoside-DNA + H(+). Its function is as follows. Involved in base excision repair of DNA damaged by oxidation or by mutagenic agents. Acts as a DNA glycosylase that recognizes and removes damaged bases. Has a preference for oxidized pyrimidines, such as thymine glycol, 5,6-dihydrouracil and 5,6-dihydrothymine. Has AP (apurinic/apyrimidinic) lyase activity and introduces nicks in the DNA strand. Cleaves the DNA backbone by beta-delta elimination to generate a single-strand break at the site of the removed base with both 3'- and 5'-phosphates. The chain is Endonuclease 8 from Klebsiella pneumoniae subsp. pneumoniae (strain ATCC 700721 / MGH 78578).